The primary structure comprises 131 residues: Sperm microtubule inner protein 11 (131 aa).

Positions 17–44 (SKKRDKTEETNQKDPVPTRLPPIFSEDG) are disordered.

Microtubule inner protein component of sperm flagellar doublet microtubules. Expressed in sperm.

Its subcellular location is the cytoplasm. The protein localises to the cytoskeleton. It is found in the flagellum axoneme. In terms of biological role, microtubule inner protein (MIP) part of the dynein-decorated doublet microtubules (DMTs) in flagellum axoneme. May serve to reinforce and thus stabilize the microtubule structure in the sperm flagella. The sequence is that of Sperm microtubule inner protein 11 (SPMIP11) from Bos taurus (Bovine).